The chain runs to 294 residues: Pyridoxal 5'-phosphate synthase subunit PdxS (294 aa).

Residue aspartate 24 coordinates D-ribose 5-phosphate. Lysine 81 functions as the Schiff-base intermediate with D-ribose 5-phosphate in the catalytic mechanism. Residue glycine 153 coordinates D-ribose 5-phosphate. Residue arginine 165 coordinates D-glyceraldehyde 3-phosphate. Residues glycine 214 and 235 to 236 contribute to the D-ribose 5-phosphate site; that span reads GS.

It belongs to the PdxS/SNZ family. As to quaternary structure, in the presence of PdxT, forms a dodecamer of heterodimers.

The catalysed reaction is aldehydo-D-ribose 5-phosphate + D-glyceraldehyde 3-phosphate + L-glutamine = pyridoxal 5'-phosphate + L-glutamate + phosphate + 3 H2O + H(+). The protein operates within cofactor biosynthesis; pyridoxal 5'-phosphate biosynthesis. Its function is as follows. Catalyzes the formation of pyridoxal 5'-phosphate from ribose 5-phosphate (RBP), glyceraldehyde 3-phosphate (G3P) and ammonia. The ammonia is provided by the PdxT subunit. Can also use ribulose 5-phosphate and dihydroxyacetone phosphate as substrates, resulting from enzyme-catalyzed isomerization of RBP and G3P, respectively. This is Pyridoxal 5'-phosphate synthase subunit PdxS from Anoxybacillus flavithermus (strain DSM 21510 / WK1).